We begin with the raw amino-acid sequence, 598 residues long: Beta-fructofuranosidase, insoluble isoenzyme 2 (598 aa).

The signal sequence occupies residues 1 to 25 (MGVLGSRVAWAWLVQLLLLQQLAGA). Asp-69 is a catalytic residue. 3 N-linked (GlcNAc...) asparagine glycosylation sites follow: Asn-164, Asn-189, and Asn-348.

Belongs to the glycosyl hydrolase 32 family.

It is found in the secreted. Its subcellular location is the extracellular space. The protein localises to the apoplast. It localises to the cell wall. It catalyses the reaction Hydrolysis of terminal non-reducing beta-D-fructofuranoside residues in beta-D-fructofuranosides.. May play a role in sucrose partitioning during seed development. The chain is Beta-fructofuranosidase, insoluble isoenzyme 2 (CIN2) from Oryza sativa subsp. indica (Rice).